The chain runs to 84 residues: Small ribosomal subunit protein uS17 (84 aa).

It belongs to the universal ribosomal protein uS17 family. As to quaternary structure, part of the 30S ribosomal subunit.

Its function is as follows. One of the primary rRNA binding proteins, it binds specifically to the 5'-end of 16S ribosomal RNA. The protein is Small ribosomal subunit protein uS17 of Klebsiella pneumoniae subsp. pneumoniae (strain ATCC 700721 / MGH 78578).